A 192-amino-acid polypeptide reads, in one-letter code: uncharacterized protein (192 aa).

It belongs to the CAPAB/TerDEXZ family.

This is an uncharacterized protein from Bacillus subtilis (strain 168).